The sequence spans 207 residues: Thiamine-phosphate synthase (207 aa).

4-amino-2-methyl-5-(diphosphooxymethyl)pyrimidine-binding positions include 41–45 (QLRLK) and Asn73. Asp74 and Asp93 together coordinate Mg(2+). Thr111 serves as a coordination point for 4-amino-2-methyl-5-(diphosphooxymethyl)pyrimidine. 138–140 (TKT) is a binding site for 2-[(2R,5Z)-2-carboxy-4-methylthiazol-5(2H)-ylidene]ethyl phosphate. A 4-amino-2-methyl-5-(diphosphooxymethyl)pyrimidine-binding site is contributed by Lys141. Gly168 is a binding site for 2-[(2R,5Z)-2-carboxy-4-methylthiazol-5(2H)-ylidene]ethyl phosphate.

Belongs to the thiamine-phosphate synthase family. It depends on Mg(2+) as a cofactor.

The enzyme catalyses 2-[(2R,5Z)-2-carboxy-4-methylthiazol-5(2H)-ylidene]ethyl phosphate + 4-amino-2-methyl-5-(diphosphooxymethyl)pyrimidine + 2 H(+) = thiamine phosphate + CO2 + diphosphate. The catalysed reaction is 2-(2-carboxy-4-methylthiazol-5-yl)ethyl phosphate + 4-amino-2-methyl-5-(diphosphooxymethyl)pyrimidine + 2 H(+) = thiamine phosphate + CO2 + diphosphate. It catalyses the reaction 4-methyl-5-(2-phosphooxyethyl)-thiazole + 4-amino-2-methyl-5-(diphosphooxymethyl)pyrimidine + H(+) = thiamine phosphate + diphosphate. It participates in cofactor biosynthesis; thiamine diphosphate biosynthesis; thiamine phosphate from 4-amino-2-methyl-5-diphosphomethylpyrimidine and 4-methyl-5-(2-phosphoethyl)-thiazole: step 1/1. Its function is as follows. Condenses 4-methyl-5-(beta-hydroxyethyl)thiazole monophosphate (THZ-P) and 2-methyl-4-amino-5-hydroxymethyl pyrimidine pyrophosphate (HMP-PP) to form thiamine monophosphate (TMP). The chain is Thiamine-phosphate synthase from Pelagibacter ubique (strain HTCC1062).